The sequence spans 201 residues: Glutathione peroxidase 1 (201 aa).

Position 32 is a phosphoserine (Ser-32). Sec-47 is a catalytic residue. A non-standard amino acid (selenocysteine) is located at residue Sec-47. N6-acetyllysine; alternate occurs at positions 86, 112, and 146. N6-succinyllysine; alternate is present on residues Lys-86, Lys-112, and Lys-146. Residues Ser-195 and Ser-199 each carry the phosphoserine modification.

It belongs to the glutathione peroxidase family. As to quaternary structure, homotetramer. Interacts with MIEN1. In terms of processing, during periods of oxidative stress, Sec-47 may react with a superoxide radical, irreversibly lose hydroselenide and be converted to dehydroalanine.

It localises to the cytoplasm. It is found in the mitochondrion. It carries out the reaction 2 glutathione + H2O2 = glutathione disulfide + 2 H2O. It catalyses the reaction a hydroperoxy polyunsaturated fatty acid + 2 glutathione = a hydroxy polyunsaturated fatty acid + glutathione disulfide + H2O. The enzyme catalyses tert-butyl hydroperoxide + 2 glutathione = tert-butanol + glutathione disulfide + H2O. The catalysed reaction is cumene hydroperoxide + 2 glutathione = 2-phenylpropan-2-ol + glutathione disulfide + H2O. It carries out the reaction (13S)-hydroperoxy-(9Z,11E)-octadecadienoate + 2 glutathione = (13S)-hydroxy-(9Z,11E)-octadecadienoate + glutathione disulfide + H2O. It catalyses the reaction (9S)-hydroperoxy-(10E,12Z)-octadecadienoate + 2 glutathione = (9S)-hydroxy-(10E,12Z)-octadecadienoate + glutathione disulfide + H2O. The enzyme catalyses (5S)-hydroperoxy-(6E,8Z,11Z,14Z)-eicosatetraenoate + 2 glutathione = (5S)-hydroxy-(6E,8Z,11Z,14Z)-eicosatetraenoate + glutathione disulfide + H2O. The catalysed reaction is (12S)-hydroperoxy-(5Z,8Z,10E,14Z)-eicosatetraenoate + 2 glutathione = (12S)-hydroxy-(5Z,8Z,10E,14Z)-eicosatetraenoate + glutathione disulfide + H2O. It carries out the reaction (12R)-hydroperoxy-(5Z,8Z,10E,14Z)-eicosatetraenoate + 2 glutathione = (12R)-hydroxy-(5Z,8Z,10E,14Z)-eicosatetraenoate + glutathione disulfide + H2O. It catalyses the reaction (15S)-hydroperoxy-(5Z,8Z,11Z,13E)-eicosatetraenoate + 2 glutathione = (15S)-hydroxy-(5Z,8Z,11Z,13E)-eicosatetraenoate + glutathione disulfide + H2O. The enzyme catalyses (5S)-hydroperoxy-(6E,8Z,11Z,14Z,17Z)-eicosapentaenoate + 2 glutathione = (5S)-hydroxy-(6E,8Z,11Z,14Z,17Z)-eicosapentaenoate + glutathione disulfide + H2O. The catalysed reaction is (12S)-hydroperoxy-(5Z,8Z,10E,14Z,17Z)-eicosapentaenoate + 2 glutathione = (12S)-hydroxy-(5Z,8Z,10E,14Z,17Z)-eicosapentaenoate + glutathione disulfide + H2O. It carries out the reaction (15S)-hydroperoxy-(5Z,8Z,11Z,13E,17Z)-eicosapentaenoate + 2 glutathione = (15S)-hydroxy-(5Z,8Z,11Z,13E,17Z)-eicosapentaenoate + glutathione disulfide + H2O. It catalyses the reaction (15S)-hydroperoxy-(11Z,13E)-eicosadienoate + 2 glutathione = (15S)-hydroxy-(11Z,13E)-eicosadienoate + glutathione disulfide + H2O. The enzyme catalyses (17S)-hydroperoxy-(4Z,7Z,10Z,13Z,15E,19Z)-docosahexaenoate + 2 glutathione = (17S)-hydroxy-(4Z,7Z,10Z,13Z,15E,19Z)-docosahexaenoate + glutathione disulfide + H2O. Catalyzes the reduction of hydroperoxides in a glutathione-dependent manner thus regulating cellular redox homeostasis. Can reduce small soluble hydroperoxides such as H2O2, cumene hydroperoxide and tert-butyl hydroperoxide, as well as several fatty acid-derived hydroperoxides. In platelets catalyzes the reduction of 12-hydroperoxyeicosatetraenoic acid, the primary product of the arachidonate 12-lipoxygenase pathway. The polypeptide is Glutathione peroxidase 1 (GPX1) (Pan troglodytes (Chimpanzee)).